Reading from the N-terminus, the 250-residue chain is Ribonuclease HII (250 aa).

Residues 66-250 (QLVAGVDEVG…TFAPVSDFFK (185 aa)) enclose the RNase H type-2 domain. A divalent metal cation-binding residues include aspartate 72, glutamate 73, and aspartate 164.

This sequence belongs to the RNase HII family. It depends on Mn(2+) as a cofactor. Mg(2+) serves as cofactor.

The protein resides in the cytoplasm. The catalysed reaction is Endonucleolytic cleavage to 5'-phosphomonoester.. In terms of biological role, endonuclease that specifically degrades the RNA of RNA-DNA hybrids. This Lactobacillus acidophilus (strain ATCC 700396 / NCK56 / N2 / NCFM) protein is Ribonuclease HII.